The primary structure comprises 639 residues: Extracellular metalloproteinase NpIII (639 aa).

Positions 1-16 are cleaved as a signal peptide; the sequence is MHMLLFIGALALPVFV. The propeptide occupies 17–245; the sequence is CTQSCEPASL…IHGVVDYVSE (229 aa). N-linked (GlcNAc...) asparagine glycans are attached at residues Asn287, Asn320, Asn336, and Asn368. A Zn(2+)-binding site is contributed by His429. Glu430 is a catalytic residue. His433 is a binding site for Zn(2+). Asn509 is a glycosylation site (N-linked (GlcNAc...) asparagine).

This sequence belongs to the peptidase M36 family. Requires Zn(2+) as cofactor.

Its subcellular location is the secreted. In terms of biological role, secreted metalloproteinase that allows assimilation of proteinaceous substrates. The protein is Extracellular metalloproteinase NpIII (NpIII) of Aspergillus oryzae (strain ATCC 42149 / RIB 40) (Yellow koji mold).